A 452-amino-acid polypeptide reads, in one-letter code: MNFSAVILAAGKGTRMYSNKPKVLHTLAGKPMAKHVIDTCEGLGAQNIHLVYGHGGDQMKAELGEERVQWVLQAEQLGTGHAVNQAAPEFADDEKVLVLYGDVPLISAETVENLLDAQPTGGIALLTVVLDNPMGYGRIIRRNGPVIAIVEQKDATEEQKLIKEINTGVMVATGGDLKRWLAALKNENAQGEYYLTDIIAAAHDEGRAVEAVHPVSPIEVEGVNDRAQLARLERAYQAAQAQKLLEQGVMLRDPSRFDLRGTLQCGMDIEIDANVIIEGNVTLGDNVVIGAGCVLKDCEIDDNTVLRPYSVIEGATVGEECTVGPFTRLRPGAELCNDAHVGNFVEVKNVRLGEGSKANHLTYLGDAEIGKRVNVGAGVITCNYDGANKFKTIIGDDVFVGSDSQLIAPVTVANGATVGAGSTVTKDVNENELYISRAKERRIANWQRPTKK.

Residues 1-226 (MNFSAVILAA…PIEVEGVNDR (226 aa)) are pyrophosphorylase. UDP-N-acetyl-alpha-D-glucosamine is bound by residues 8 to 11 (LAAG), lysine 22, glutamine 73, 78 to 79 (GT), 100 to 102 (YGD), glycine 137, glutamate 151, asparagine 166, and asparagine 224. Residue aspartate 102 coordinates Mg(2+). Asparagine 224 serves as a coordination point for Mg(2+). The segment at 227–247 (AQLARLERAYQAAQAQKLLEQ) is linker. The interval 248–452 (GVMLRDPSRF…IANWQRPTKK (205 aa)) is N-acetyltransferase. 2 residues coordinate UDP-N-acetyl-alpha-D-glucosamine: arginine 330 and lysine 348. Residue histidine 360 is the Proton acceptor of the active site. Tyrosine 363 and asparagine 374 together coordinate UDP-N-acetyl-alpha-D-glucosamine. Residues alanine 377, 383–384 (NY), serine 402, alanine 420, and arginine 437 contribute to the acetyl-CoA site.

The protein in the N-terminal section; belongs to the N-acetylglucosamine-1-phosphate uridyltransferase family. It in the C-terminal section; belongs to the transferase hexapeptide repeat family. As to quaternary structure, homotrimer. Mg(2+) serves as cofactor.

It is found in the cytoplasm. It catalyses the reaction alpha-D-glucosamine 1-phosphate + acetyl-CoA = N-acetyl-alpha-D-glucosamine 1-phosphate + CoA + H(+). The enzyme catalyses N-acetyl-alpha-D-glucosamine 1-phosphate + UTP + H(+) = UDP-N-acetyl-alpha-D-glucosamine + diphosphate. The protein operates within nucleotide-sugar biosynthesis; UDP-N-acetyl-alpha-D-glucosamine biosynthesis; N-acetyl-alpha-D-glucosamine 1-phosphate from alpha-D-glucosamine 6-phosphate (route II): step 2/2. It participates in nucleotide-sugar biosynthesis; UDP-N-acetyl-alpha-D-glucosamine biosynthesis; UDP-N-acetyl-alpha-D-glucosamine from N-acetyl-alpha-D-glucosamine 1-phosphate: step 1/1. It functions in the pathway bacterial outer membrane biogenesis; LPS lipid A biosynthesis. In terms of biological role, catalyzes the last two sequential reactions in the de novo biosynthetic pathway for UDP-N-acetylglucosamine (UDP-GlcNAc). The C-terminal domain catalyzes the transfer of acetyl group from acetyl coenzyme A to glucosamine-1-phosphate (GlcN-1-P) to produce N-acetylglucosamine-1-phosphate (GlcNAc-1-P), which is converted into UDP-GlcNAc by the transfer of uridine 5-monophosphate (from uridine 5-triphosphate), a reaction catalyzed by the N-terminal domain. This is Bifunctional protein GlmU from Aliivibrio fischeri (strain MJ11) (Vibrio fischeri).